The primary structure comprises 311 residues: Syntaxin-111 (311 aa).

The Cytoplasmic segment spans residues 1–284 (MNDLMTKSFM…AREHQRSSRK (284 aa)). One can recognise a t-SNARE coiled-coil homology domain in the interval 213 to 275 (VHEIQDRHDA…QGGNKELRKA (63 aa)). A helical; Anchor for type IV membrane protein membrane pass occupies residues 285-305 (WLCIGIIILLLLVLLVIVPIA). The Vesicular segment spans residues 306–311 (TSFKRS).

It belongs to the syntaxin family. As to expression, expressed in roots and panicles.

Its subcellular location is the cell membrane. The protein resides in the cytoplasm. Its function is as follows. Vesicle trafficking protein that functions in the secretory pathway. In Oryza sativa subsp. japonica (Rice), this protein is Syntaxin-111.